The primary structure comprises 288 residues: Alpha/beta hydrolase domain-containing protein 17B (288 aa).

Catalysis depends on charge relay system residues Ser-170, Asp-235, and His-264.

It belongs to the AB hydrolase superfamily. ABHD17 family. Palmitoylated on cysteine residues located in a cysteine cluster at the N-terminus which promotes membrane localization.

It localises to the cell membrane. The protein resides in the recycling endosome membrane. It is found in the cell projection. Its subcellular location is the dendritic spine. The protein localises to the postsynaptic density membrane. It carries out the reaction S-hexadecanoyl-L-cysteinyl-[protein] + H2O = L-cysteinyl-[protein] + hexadecanoate + H(+). Hydrolyzes fatty acids from S-acylated cysteine residues in proteins. Has depalmitoylating activity towards NRAS. The protein is Alpha/beta hydrolase domain-containing protein 17B of Gallus gallus (Chicken).